We begin with the raw amino-acid sequence, 237 residues long: ATP synthase subunit a (237 aa).

5 helical membrane-spanning segments follow: residues 17 to 37, 75 to 95, 112 to 132, 179 to 201, and 214 to 234; these read LSDM…AVAA, FLTL…LGLP, DATV…YYGV, ILLG…GAAI, and GTIQ…HKVS.

Belongs to the ATPase A chain family. As to quaternary structure, F-type ATPases have 2 components, CF(1) - the catalytic core - and CF(0) - the membrane proton channel. CF(1) has five subunits: alpha(3), beta(3), gamma(1), delta(1), epsilon(1). CF(0) has three main subunits: a(1), b(2) and c(9-12). The alpha and beta chains form an alternating ring which encloses part of the gamma chain. CF(1) is attached to CF(0) by a central stalk formed by the gamma and epsilon chains, while a peripheral stalk is formed by the delta and b chains.

The protein resides in the cell membrane. In terms of biological role, key component of the proton channel; it plays a direct role in the translocation of protons across the membrane. The polypeptide is ATP synthase subunit a (Geobacillus kaustophilus (strain HTA426)).